The primary structure comprises 180 residues: Outer-membrane lipoprotein LolB (180 aa).

An N-terminal signal peptide occupies residues 1–16 (MIRRVLLLSLALLLAG). C17 carries N-palmitoyl cysteine lipidation. C17 is lipidated: S-diacylglycerol cysteine.

This sequence belongs to the LolB family. As to quaternary structure, monomer.

It localises to the cell outer membrane. Functionally, plays a critical role in the incorporation of lipoproteins in the outer membrane after they are released by the LolA protein. The sequence is that of Outer-membrane lipoprotein LolB from Chromobacterium violaceum (strain ATCC 12472 / DSM 30191 / JCM 1249 / CCUG 213 / NBRC 12614 / NCIMB 9131 / NCTC 9757 / MK).